Consider the following 347-residue polypeptide: uncharacterized protein (347 aa).

Positions 207, 218, 279, 312, and 326 each coordinate Mn(2+).

Belongs to the peptidase M24B family. The cofactor is Mn(2+).

This is an uncharacterized protein from Methanocaldococcus jannaschii (strain ATCC 43067 / DSM 2661 / JAL-1 / JCM 10045 / NBRC 100440) (Methanococcus jannaschii).